We begin with the raw amino-acid sequence, 623 residues long: Kelch repeat and BTB domain-containing protein 11 (623 aa).

Positions 1-129 (MEHAVAPCVL…PEEPGEPAPV (129 aa)) are disordered. The segment covering 12–31 (PGTEPGAAGESESEGAASPA) has biased composition (low complexity). Polar residues predominate over residues 42 to 55 (CFSSGEESPPQSLA). 4 positions are modified to phosphoserine: Ser64, Ser67, Ser87, and Ser107. A compositionally biased stretch (low complexity) spans 79–91 (EAGSAGAASPEEL). The region spanning 140–196 (PDLVLEVSGRRLRAHKAVLAARSDYFRARASRDVLRVQGVSLTALRLLLADAYSGRM) is the BTB domain. 4 Kelch repeats span residues 311 to 359 (RPQS…VLYN), 360 to 412 (YLFV…ALDG), 413 to 455 (HLYA…ATTC), and 458 to 500 (EIYV…ALDG).

This chain is Kelch repeat and BTB domain-containing protein 11 (KBTBD11), found in Homo sapiens (Human).